Here is a 1092-residue protein sequence, read N- to C-terminus: Rho GTPase-activating protein 7 (1092 aa).

Residues 11 to 78 (LTQIEAKEAC…LNKCAVMKLE (68 aa)) enclose the SAM domain. Residues S86, S89, and S129 each carry the phosphoserine modification. Disordered regions lie at residues 121 to 179 (PKQD…DATT), 297 to 330 (RSVS…TRSL), 409 to 434 (GPGH…NSSS), and 492 to 553 (SDEG…SGVG). Residues 130 to 143 (PDNSRLQSATSHES) show a composition bias toward polar residues. 2 stretches are compositionally biased toward low complexity: residues 154–174 (VASV…AAHS) and 299–325 (VSNS…SPVT). The tract at residues 275–448 (QLNCVEISAL…RLSIYDNVPG (174 aa)) is focal adhesion-targeting (FAT). Position 322 is a phosphoserine (S322). Over residues 415–426 (LRRENSHDSPKE) the composition is skewed to basic and acidic residues. Over residues 500–512 (ALDSVSPCPSSPK) the composition is skewed to polar residues. The segment covering 514–526 (IHLDVDHDRRTPS) has biased composition (basic and acidic residues). Over residues 527-536 (DLDSTGNSLN) the composition is skewed to polar residues. Positions 615-637 (KHGFSWAVPKFMKRIKVPDYKDR) are polybasic cluster (PBR). In terms of domain architecture, Rho-GAP spans 642 to 848 (VPLTVNVQRS…HMIAECKKLF (207 aa)). The region spanning 878–1085 (NSDQPADYRH…RDSFSNQNTE (208 aa)) is the START domain.

As to quaternary structure, interacts with EF1A1, facilitates EF1A1 distribution to the membrane periphery and ruffles upon growth factor stimulation and suppresses cell migration. Interacts with tensin TNS1 (via N-terminus); the interaction is decreased by phosphorylation of TNS1. Interacts with TNS3 and PTEN; in resting cells, interacts with TNS3 (via C2 tensin-type domain) but, following growth factor stimulation, TNS3 and PTEN are phosphorylated which leads to weakened interaction with TNS3 and enhanced interaction with PTEN. Interacts (via C-terminus) with tensin TNS4 (via SH2 domain); the interaction is independent of tyrosine phosphorylation of DLC1. As to expression, widely expressed with the highest levels in heart, liver and lung.

Its subcellular location is the cytoplasm. It localises to the cell junction. It is found in the focal adhesion. The protein localises to the membrane. Functions as a GTPase-activating protein for the small GTPases RHOA, RHOB, RHOC and CDC42, terminating their downstream signaling. This induces morphological changes and detachment through cytoskeletal reorganization, playing a critical role in biological processes such as cell migration and proliferation. Also functions in vivo as an activator of the phospholipase PLCD1. Active DLC1 increases cell migration velocity but reduces directionality. Required for growth factor-induced epithelial cell migration; in resting cells, interacts with TNS3 while PTEN interacts with the p85 regulatory subunit of the PI3K kinase complex but growth factor stimulation induces phosphorylation of TNS3 and PTEN, causing them to change their binding preference so that PTEN interacts with DLC1 and TNS3 interacts with p85. The PTEN-DLC1 complex translocates to the posterior of migrating cells to activate RHOA while the TNS3-p85 complex translocates to the leading edge of migrating cells to promote RAC1 activation. The polypeptide is Rho GTPase-activating protein 7 (Dlc1) (Mus musculus (Mouse)).